The sequence spans 194 residues: DPY30 domain-containing protein 2 (194 aa).

The interval 126–172 is disordered; sequence EAFEKEPLKQESLPGTSDMIPGMPQQSPSSEPSVSSQVDLNTGTPQE. Residues 149–163 show a composition bias toward low complexity; the sequence is PQQSPSSEPSVSSQV.

This sequence belongs to the dpy-30 family.

In Bos taurus (Bovine), this protein is DPY30 domain-containing protein 2 (DYDC2).